Reading from the N-terminus, the 277-residue chain is Bifunctional protein FolD (277 aa).

Residues 164–166 (GRS), Ser189, and Val230 contribute to the NADP(+) site.

It belongs to the tetrahydrofolate dehydrogenase/cyclohydrolase family. In terms of assembly, homodimer.

It carries out the reaction (6R)-5,10-methylene-5,6,7,8-tetrahydrofolate + NADP(+) = (6R)-5,10-methenyltetrahydrofolate + NADPH. It catalyses the reaction (6R)-5,10-methenyltetrahydrofolate + H2O = (6R)-10-formyltetrahydrofolate + H(+). It participates in one-carbon metabolism; tetrahydrofolate interconversion. Its function is as follows. Catalyzes the oxidation of 5,10-methylenetetrahydrofolate to 5,10-methenyltetrahydrofolate and then the hydrolysis of 5,10-methenyltetrahydrofolate to 10-formyltetrahydrofolate. The protein is Bifunctional protein FolD of Exiguobacterium sibiricum (strain DSM 17290 / CCUG 55495 / CIP 109462 / JCM 13490 / 255-15).